Here is a 732-residue protein sequence, read N- to C-terminus: MDPSMDTWDLSSPLISLWINRFYIYLGFAVSISLWICVQIVIKTQGRNLQEKSVPKAAQDLMTNGYVSLQEKDVFVSGVKIFYGSQTGTAKGFATVLAEAVTSLDLPVAIINLKEYDPDDHLIEEVTSKNVCVFLVATYTDGLPTESAEWFCKWLEEAAIDFRFGKTYLKGMRYAVFGLGNSAYASHFNKVGKNVDKWLWMLGAHRVMSRGEGDCDVVKSKHGSIEADFRAWKTKFISQLQALQKGERKKSCGGHCKKGKCESHQRGSEEREEGSHEQDELHHRDTEEEEPFESSSEEEFGGKDHQSLNSIVDVEDLGKIMDHVKKEKREKEQREEKSGLFRNMGRNEDGEIRAMITPALREALTKQGYQLIGSHSGVKLCRWTKSMLRGRGGCYKHTFYGIESHRCMETTPSLACANKCVFCWRHHTNPVGTEWRWKMDQPEMILKEAIENHQNMIKQFKGVPGVKAERFEEGMTVKHCALSLVGEPIMYPEINRFLKLLHQCKISSFLVTNAQFPAEIRNLEPVTQLYVSVDASTKDSLKKIDRPLFKDFWRRFLDSLKALAVKQQRTVYRLTLVKAWNVDELQAYAQLVSLGNPDFIEVKGVTYCGESSASSLTMAHVPWHEEVVQFVCELVDLIPDYEIACEHEHSNCLLIAHKKFKIGGEWWTWIDYNRFQELIQEYEDSSGSKTFSAKDYMARTPHWALFGANERGFDPKDTRHQRKNKSKAISGC.

Positions 79–237 (VKIFYGSQTG…DFRAWKTKFI (159 aa)) constitute a Flavodoxin-like domain. FMN-binding positions include 85–89 (SQTGT) and 176–208 (VFGLGNSAYASHFNKVGKNVDKWLWMLGAHRVM). Residues 248-312 (RKKSCGGHCK…KDHQSLNSIV (65 aa)) form a disordered region. The span at 259–286 (GKCESHQRGSEEREEGSHEQDELHHRDT) shows a compositional bias: basic and acidic residues. The segment covering 287–299 (EEEEPFESSSEEE) has biased composition (acidic residues). The Radical SAM core domain maps to 400 to 644 (YGIESHRCME…VDLIPDYEIA (245 aa)). [4Fe-4S] cluster contacts are provided by C416, C420, and C423.

The protein belongs to the TYW1 family. Requires [4Fe-4S] cluster as cofactor.

The enzyme catalyses N(1)-methylguanosine(37) in tRNA(Phe) + pyruvate + S-adenosyl-L-methionine = 4-demethylwyosine(37) in tRNA(Phe) + 5'-deoxyadenosine + L-methionine + CO2 + H2O. It functions in the pathway tRNA modification; wybutosine-tRNA(Phe) biosynthesis. Its function is as follows. Probable component of the wybutosine biosynthesis pathway. Wybutosine is a hyper modified guanosine with a tricyclic base found at the 3'-position adjacent to the anticodon of eukaryotic phenylalanine tRNA. Catalyzes the condensation of N-methylguanine with 2 carbon atoms from pyruvate to form the tricyclic 4-demethylwyosine, an intermediate in wybutosine biosynthesis. This chain is S-adenosyl-L-methionine-dependent tRNA 4-demethylwyosine synthase TYW1 (TYW1), found in Pongo abelii (Sumatran orangutan).